Reading from the N-terminus, the 288-residue chain is 4-diphosphocytidyl-2-C-methyl-D-erythritol kinase (288 aa).

Lysine 8 is an active-site residue. Residue 90 to 100 (PFGAGLGGGSS) participates in ATP binding. The active site involves aspartate 132.

It belongs to the GHMP kinase family. IspE subfamily.

The enzyme catalyses 4-CDP-2-C-methyl-D-erythritol + ATP = 4-CDP-2-C-methyl-D-erythritol 2-phosphate + ADP + H(+). Its pathway is isoprenoid biosynthesis; isopentenyl diphosphate biosynthesis via DXP pathway; isopentenyl diphosphate from 1-deoxy-D-xylulose 5-phosphate: step 3/6. Functionally, catalyzes the phosphorylation of the position 2 hydroxy group of 4-diphosphocytidyl-2C-methyl-D-erythritol. In Chlorobium chlorochromatii (strain CaD3), this protein is 4-diphosphocytidyl-2-C-methyl-D-erythritol kinase.